We begin with the raw amino-acid sequence, 126 residues long: 5-hydroxyisourate hydrolase (126 aa).

Residues His-16, Arg-54, and Tyr-123 each contribute to the substrate site.

It belongs to the transthyretin family. 5-hydroxyisourate hydrolase subfamily. Homotetramer.

It catalyses the reaction 5-hydroxyisourate + H2O = 5-hydroxy-2-oxo-4-ureido-2,5-dihydro-1H-imidazole-5-carboxylate + H(+). Functionally, catalyzes the hydrolysis of 5-hydroxyisourate (HIU) to 2-oxo-4-hydroxy-4-carboxy-5-ureidoimidazoline (OHCU). This is 5-hydroxyisourate hydrolase from Pseudomonas aeruginosa (strain ATCC 15692 / DSM 22644 / CIP 104116 / JCM 14847 / LMG 12228 / 1C / PRS 101 / PAO1).